Consider the following 462-residue polypeptide: Glycine--tRNA ligase (462 aa).

Residues Arg-100 and Glu-170 each contribute to the substrate site. Residues 202–204 (RNE), 212–217 (FRTREF), 287–288 (EL), and 331–334 (GVER) each bind ATP. Substrate is bound at residue 217-221 (FEQME). Substrate is bound at residue 327–331 (EPSVG).

This sequence belongs to the class-II aminoacyl-tRNA synthetase family. In terms of assembly, homodimer.

It localises to the cytoplasm. The enzyme catalyses tRNA(Gly) + glycine + ATP = glycyl-tRNA(Gly) + AMP + diphosphate. Its function is as follows. Catalyzes the attachment of glycine to tRNA(Gly). This Malacoplasma penetrans (strain HF-2) (Mycoplasma penetrans) protein is Glycine--tRNA ligase.